The primary structure comprises 682 residues: MSRKQLALFEPTLVLQALKEAVKKLNPQAQWRNPVMFIVWIGSLLTTCICIAMASGAMPGNALFSAAISGWLWVTVLFANFAEALAEGRSKAQANSLKGVKKTAFARKLREPKYGAAADKVPADQLRKGDIVLVEAGDIIPCDGEVIEGGASVDESAITGESAPVIRESGGDFASVTGGTRILSDWLVIECSVNPGETFLDRMIAMVEGAQRRKTPNEIALTILLIALTIVFLLATATLWPFSAWGGNAVSVTVLVALLVCLIPTTIGGLLSAIGVAGMSRMLGANVIATSGRAVEAAGDVDVLLLDKTGTITLGNRQASEFIPAQGVEEKTLANAAQLASLADETPEGRSIVILAKQRFNLRERDVQSLHATFVPFTAQSRMSGINIDNRMIRKGSVDAIRRHVEANGGHFPADVDQKVDQVARQGATPLVVVEGSRVLGVIALKDIVKGGIKERFAQLRKMGIKTVMITGDNRLTAAAIAAEAGVDDFLAEATPEAKLALIRQYQAEGRLVAMTGDGTNDAPALAQADVAVAMNSGTQAAKEAGNMVDLDSNPTKLIEVVHIGKQMLMTRGSLTTFSIANDVAKYFAIIPAAFAATYPQLNALNIMRLHSPDSAILSAVIFNALIIVFLIPLALKGVSYKPLTASAMLRRNLWIYGLGGLLVPFIGIKVIDLLLTVCGLV.

Helical transmembrane passes span 34 to 54, 62 to 82, 219 to 239, and 254 to 274; these read PVMF…IAMA, ALFS…ANFA, IALT…TATL, and VLVA…LSAI. The 4-aspartylphosphate intermediate role is filled by D307. ATP-binding positions include D344, E348, 377-384, and K395; that span reads FTAQSRMS. Residues D518 and D522 each contribute to the Mg(2+) site. The next 3 helical transmembrane spans lie at 588-608, 616-636, and 656-676; these read FAII…LNIM, AILS…PLAL, and IYGL…DLLL.

This sequence belongs to the cation transport ATPase (P-type) (TC 3.A.3) family. Type IA subfamily. In terms of assembly, the system is composed of three essential subunits: KdpA, KdpB and KdpC.

Its subcellular location is the cell inner membrane. It carries out the reaction K(+)(out) + ATP + H2O = K(+)(in) + ADP + phosphate + H(+). Functionally, part of the high-affinity ATP-driven potassium transport (or Kdp) system, which catalyzes the hydrolysis of ATP coupled with the electrogenic transport of potassium into the cytoplasm. This subunit is responsible for energy coupling to the transport system and for the release of the potassium ions to the cytoplasm. This is Potassium-transporting ATPase ATP-binding subunit from Escherichia coli O17:K52:H18 (strain UMN026 / ExPEC).